The chain runs to 233 residues: 7-cyano-7-deazaguanine synthase (233 aa).

Leucine 13–leucine 23 serves as a coordination point for ATP. The Zn(2+) site is built by cysteine 197, cysteine 206, cysteine 209, and cysteine 212.

It belongs to the QueC family. Zn(2+) is required as a cofactor.

The catalysed reaction is 7-carboxy-7-deazaguanine + NH4(+) + ATP = 7-cyano-7-deazaguanine + ADP + phosphate + H2O + H(+). Its pathway is purine metabolism; 7-cyano-7-deazaguanine biosynthesis. Catalyzes the ATP-dependent conversion of 7-carboxy-7-deazaguanine (CDG) to 7-cyano-7-deazaguanine (preQ(0)). This is 7-cyano-7-deazaguanine synthase from Anaeromyxobacter sp. (strain Fw109-5).